A 153-amino-acid polypeptide reads, in one-letter code: UPF0127 protein TGAM_1372 (153 aa).

This sequence belongs to the UPF0127 family.

The sequence is that of UPF0127 protein TGAM_1372 from Thermococcus gammatolerans (strain DSM 15229 / JCM 11827 / EJ3).